A 533-amino-acid chain; its full sequence is Early growth response protein 1 (533 aa).

Disordered stretches follow at residues 1–94 (MAAA…EQPY) and 161–237 (MTNP…PPPA). Gly residues predominate over residues 68–77 (SGGGGGGGSN). A compositionally biased stretch (low complexity) spans 164–189 (PPTSSSSAPSPAASSSSSASQSPPLS). A Glycyl lysine isopeptide (Lys-Gly) (interchain with G-Cter in SUMO2) cross-link involves residue K303. The segment at 316–336 (PSRMRKYPNRPSKTPPHERPY) is disordered. 3 C2H2-type zinc fingers span residues 336 to 360 (YACP…IRIH), 366 to 388 (FQCR…IRTH), and 394 to 416 (FACD…TKIH). Residues 407–478 (DERKRHTKIH…SSTYPSPAHS (72 aa)) are disordered. The span at 411–421 (RHTKIHLRQKD) shows a compositional bias: basic residues. Low complexity predominate over residues 427 to 475 (SVVASPAASSLSSYPSPVATSYPSPATTSFPSPVPTSYSSPGSSTYPSP).

It belongs to the EGR C2H2-type zinc-finger protein family. Interacts with SNAI1 and SP1 upon 12-O-tetradecanoylphorbol-13-acetate (TPA) induction. Detected in lung vasculature and in mononuclear phagocytes. Detected in liver (at protein level). Expressed in the liver in a circadian manner.

The protein resides in the nucleus. It is found in the cytoplasm. In terms of biological role, transcriptional regulator. Recognizes and binds to the DNA sequence 5'-GCG(T/G)GGGCG-3'(EGR-site) in the promoter region of target genes. Binds double-stranded target DNA, irrespective of the cytosine methylation status. Regulates the transcription of numerous target genes, and thereby plays an important role in regulating the response to growth factors, DNA damage, and ischemia. Plays a role in the regulation of cell survival, proliferation and cell death. Activates expression of p53/TP53 and TGFB1, and thereby helps prevent tumor formation. Required for normal progress through mitosis and normal proliferation of hepatocytes after partial hepatectomy. Mediates responses to ischemia and hypoxia; regulates the expression of proteins such as IL1B and CXCL2 that are involved in inflammatory processes and development of tissue damage after ischemia. Regulates biosynthesis of luteinizing hormone (LHB) in the pituitary. Regulates the amplitude of the expression rhythms of clock genes: BMAL1, PER2 and NR1D1 in the liver via the activation of PER1 (clock repressor) transcription. Regulates the rhythmic expression of core-clock gene BMAL1 in the suprachiasmatic nucleus (SCN). The polypeptide is Early growth response protein 1 (Egr1) (Mus musculus (Mouse)).